The sequence spans 505 residues: Maturase K (505 aa).

It belongs to the intron maturase 2 family. MatK subfamily.

The protein resides in the plastid. It is found in the chloroplast. Its function is as follows. Usually encoded in the trnK tRNA gene intron. Probably assists in splicing its own and other chloroplast group II introns. The polypeptide is Maturase K (Amaranthus greggii (Gregg's amaranth)).